Reading from the N-terminus, the 284-residue chain is uncharacterized protein (284 aa).

A run of 3 helical transmembrane segments spans residues 174–194, 217–237, and 241–261; these read LFVL…YISI, MLIP…PGTA, and LIVL…SGSC.

The protein resides in the membrane. This is an uncharacterized protein from Saccharomyces cerevisiae (strain ATCC 204508 / S288c) (Baker's yeast).